We begin with the raw amino-acid sequence, 328 residues long: GMP reductase (328 aa).

The active-site Thioimidate intermediate is the C176. 205–228 lines the NADP(+) pocket; that stretch reads IIADGGIRTHGDIAKSIRFGASMI.

It belongs to the IMPDH/GMPR family. GuaC type 2 subfamily.

The enzyme catalyses IMP + NH4(+) + NADP(+) = GMP + NADPH + 2 H(+). In terms of biological role, catalyzes the irreversible NADPH-dependent deamination of GMP to IMP. It functions in the conversion of nucleobase, nucleoside and nucleotide derivatives of G to A nucleotides, and in maintaining the intracellular balance of A and G nucleotides. This is GMP reductase from Streptococcus pneumoniae (strain JJA).